A 110-amino-acid polypeptide reads, in one-letter code: Keratin-associated protein 6-3 (110 aa).

This sequence belongs to the KRTAP type 6 family. In terms of assembly, interacts with hair keratins.

In the hair cortex, hair keratin intermediate filaments are embedded in an interfilamentous matrix, consisting of hair keratin-associated proteins (KRTAP), which are essential for the formation of a rigid and resistant hair shaft through their extensive disulfide bond cross-linking with abundant cysteine residues of hair keratins. The matrix proteins include the high-sulfur and high-glycine-tyrosine keratins. The polypeptide is Keratin-associated protein 6-3 (Homo sapiens (Human)).